Consider the following 233-residue polypeptide: Lectin (233 aa).

2 N-linked (GlcNAc...) asparagine glycosylation sites follow: Asn-26 and Asn-108. Mn(2+) is bound by residues Glu-118 and Asp-120. Ca(2+) contacts are provided by Asp-120, Trp-122, Asn-124, and Glu-129. Mn(2+) is bound by residues Glu-129 and His-134.

This sequence belongs to the leguminous lectin family. As to quaternary structure, monomer.

It is found in the secreted. In terms of biological role, has metal-independent hemagglutinating activity towards erythrocytes from rabbit and human. Hemagglutinating activity is inhibited by glycoproteins fetuin, asialo-fetuin, thyroglobulin and azocasein but not by free carbohydrates. Inhibits ADP- and epinephrin-induced but not collagen-, fibrinogen, thrombin- or arachidonic acid-induced platelet aggregation in vitro. Has anticoagulant activity in vitro. The protein is Lectin of Bauhinia forficata (Brazilian orchid-tree).